The sequence spans 307 residues: Acyl transferase (307 aa).

Residues Ser116, Asp213, and His243 each act as charge relay system in the active site.

The protein belongs to the LuxD family.

It participates in lipid metabolism; fatty acid reduction for biolumincescence. Its function is as follows. Acyl transferase is part of the fatty acid reductase system required for aldehyde biosynthesis; it produces fatty acids for the luminescent reaction. This Photorhabdus luminescens (Xenorhabdus luminescens) protein is Acyl transferase.